The following is a 100-amino-acid chain: Urease subunit gamma (100 aa).

It belongs to the urease gamma subunit family. Heterotrimer of UreA (gamma), UreB (beta) and UreC (alpha) subunits. Three heterotrimers associate to form the active enzyme.

The protein resides in the cytoplasm. The enzyme catalyses urea + 2 H2O + H(+) = hydrogencarbonate + 2 NH4(+). It participates in nitrogen metabolism; urea degradation; CO(2) and NH(3) from urea (urease route): step 1/1. The polypeptide is Urease subunit gamma (Jannaschia sp. (strain CCS1)).